A 143-amino-acid polypeptide reads, in one-letter code: MAKKVAGQLKLQVKAGSANPSPPIGPALGQRGVNIMEFCKAFNAATQEMEKGMPIPVVITYYQDKSFTFIMKQPPVTYWLKKEAKIQSGSKTPGKGGKAGTITKAQVRTIAEAKMKDLNAADVDGAMAMVEGSARSMGLEVVG.

Belongs to the universal ribosomal protein uL11 family. Part of the ribosomal stalk of the 50S ribosomal subunit. Interacts with L10 and the large rRNA to form the base of the stalk. L10 forms an elongated spine to which L12 dimers bind in a sequential fashion forming a multimeric L10(L12)X complex. One or more lysine residues are methylated.

Forms part of the ribosomal stalk which helps the ribosome interact with GTP-bound translation factors. The protein is Large ribosomal subunit protein uL11 of Allorhizobium ampelinum (strain ATCC BAA-846 / DSM 112012 / S4) (Agrobacterium vitis (strain S4)).